Here is a 578-residue protein sequence, read N- to C-terminus: MPGSTWELHLLLLLGLGLGSEQALPPPCESQIYCHGELLHQVQMARLYPDDKQFVDMPLSTAPDQVLQSFAELAATYNNTVPREQLEKFVQEHFQAVGQELESWTPGDWKESPQFLQKISDPKLRAWAEQLHLLWKKLGKKIKPEVLSQPERFSLIYSQHPFIVPGGRFVEFYYWDSYWVMEGLLLSEMAETVKGMLQNFLDLVTAYGHIPNGGRVYYLQRSQPPLLTLMMDRYVAHTGDLAFLRENIETLALELDFWAENRTISVSSGGNSHTLNRYHVPYGGPRPESYSKDTELAHTLPEGSWETLWAELKAGAESGWDFSSRWLVGSPNPDSLGSIRTSKLVPVDLNAFLCQAEELLSGFYSRLGNESQATKYRNLRAQRIAALTALLWDEDKGAWFDYDLENQKKNHEFYPSNLTPLWAGCFSDPAIADKALQYLQDSQILNHRHGIPTSLQNTGQQWDFPNAWAPLQDLVIRGLAKSPSARTQEVAFQLAQNWIRTNFDVYSQRSAMYEKYDISNAQPGGGGEYEVQEGFGWTNGVALMLLDRYGDRLSSGTQLALLEPHCLAAALLLSFLTR.

The N-terminal stretch at 1–19 (MPGSTWELHLLLLLGLGLG) is a signal peptide. Asn-78 carries N-linked (GlcNAc...) asparagine glycosylation. Residues Arg-168, 175-176 (WD), Asn-212, and 221-223 (RSQ) each bind substrate. N-linked (GlcNAc...) asparagine glycosylation is present at Asn-261. Residues 286 to 288 (RPE) and Gly-319 each bind substrate. The Proton donor/acceptor role is filled by Asp-321. An N-linked (GlcNAc...) asparagine glycan is attached at Asn-369. The Proton donor/acceptor role is filled by Glu-514. Glu-528 provides a ligand contact to substrate. Residue Ser-555 is the site of GPI-anchor amidated serine attachment. Residues 556-578 (GTQLALLEPHCLAAALLLSFLTR) constitute a propeptide, removed in mature form.

The protein belongs to the glycosyl hydrolase 37 family. In terms of assembly, homodimer; disulfide-linked. Expressed in small intestine, kidney, and to a lesser extent in liver.

It is found in the cell membrane. The enzyme catalyses alpha,alpha-trehalose + H2O = alpha-D-glucose + beta-D-glucose. Functionally, intestinal trehalase is probably involved in the hydrolysis of ingested trehalose. The polypeptide is Trehalase (TREH) (Oryctolagus cuniculus (Rabbit)).